Consider the following 483-residue polypeptide: MKGLIARFIAGFALLLWAWDMVFPWQQLMQAEENRYNQIQQRKILRVGMVNHPLSYFIGAEGTAGIEYELAKSFANYLDVRLDIKTFDNSEQLFSALKDNKVDIAAAGLLYQPELSKQFQIGSAYYSASWQVVYKKGSNRPYKLSELEGDLIIPAGSAVLPILQRLKEDNPKLSWQTTNQFTQEELLLQVAEGKIPYTVGVSVDISAAQHIRPNIAVGFDLTDEAPVLWYLPNSSYSELQAAVLDFMNHANETGLISRIEEKYFNHLAHFDYVDIQSYLKAIKLVLPKYQSLFEKYCGDLEWQMLAAIAYQESHWDPNATSPTGVRGMMMLTRDTAERMKITDRTSAEQSIRAGSEYLHMLMRQIPETVPKEDRIWYGLAAYNMGLGHLLDVRRLTRQLGGNPDNWLDVKKNLPLLAEKRHYSGLKYGYARGFEAFQYVENIRRYYSSIINHQRVEEQQIQNNEEQPSVPQEISKESDSTLKE.

Positions 1–18 (MKGLIARFIAGFALLLWA) are cleaved as a signal peptide. The segment at 19–267 (WDMVFPWQQL…RIEEKYFNHL (249 aa)) is non-LT domain. The tract at residues 269 to 483 (HFDYVDIQSY…SKESDSTLKE (215 aa)) is LT domain. Residue E312 is part of the active site. Residues 458 to 483 (QQIQNNEEQPSVPQEISKESDSTLKE) are disordered. The span at 473–483 (ISKESDSTLKE) shows a compositional bias: basic and acidic residues.

It in the N-terminal section; belongs to the bacterial solute-binding protein 3 family. This sequence in the C-terminal section; belongs to the transglycosylase Slt family.

Its subcellular location is the cell outer membrane. The catalysed reaction is Exolytic cleavage of the (1-&gt;4)-beta-glycosidic linkage between N-acetylmuramic acid (MurNAc) and N-acetylglucosamine (GlcNAc) residues in peptidoglycan, from either the reducing or the non-reducing ends of the peptidoglycan chains, with concomitant formation of a 1,6-anhydrobond in the MurNAc residue.. Murein-degrading enzyme that degrades murein glycan strands and insoluble, high-molecular weight murein sacculi, with the concomitant formation of a 1,6-anhydromuramoyl product. Lytic transglycosylases (LTs) play an integral role in the metabolism of the peptidoglycan (PG) sacculus. Their lytic action creates space within the PG sacculus to allow for its expansion as well as for the insertion of various structures such as secretion systems and flagella. This is Membrane-bound lytic murein transglycosylase F from Actinobacillus pleuropneumoniae serotype 5b (strain L20).